The chain runs to 247 residues: uncharacterized protein (247 aa).

2 consecutive transmembrane segments (helical) span residues 9–29 (IIAI…FLIF) and 37–57 (SYFL…SLII).

The protein resides in the cell membrane. This is an uncharacterized protein from Methanocaldococcus jannaschii (strain ATCC 43067 / DSM 2661 / JAL-1 / JCM 10045 / NBRC 100440) (Methanococcus jannaschii).